The sequence spans 301 residues: Protein RESTRICTED TEV MOVEMENT 3 (301 aa).

Positions Asp6–Ile134 constitute an MATH domain. Residues Lys235 to Ser289 adopt a coiled-coil conformation.

In terms of assembly, self-interacts. Interacts with RTM1.

In terms of biological role, required for the restriction of long-distance movement of the pathogenic tobacco etch virus (TEV) without causing a hypersensitive response or inducing systemic acquired resistance. This chain is Protein RESTRICTED TEV MOVEMENT 3 (RTM3), found in Arabidopsis thaliana (Mouse-ear cress).